Consider the following 180-residue polypeptide: Geminin homolog (180 aa).

Residues 1–27 (MSRIGLQQLNNSARNSPFGSEKATGTK) show a composition bias toward polar residues. Residues 1–29 (MSRIGLQQLNNSARNSPFGSEKATGTKQI) are disordered.

It belongs to the geminin family. As to quaternary structure, homodimer. Interacts with cdt-1; the interaction most likely inhibits the ability of cdt-1 to load the mini-chromosome maintenance (MCM) complex onto DNA and therefore reduces DNA replication licensing activity. Interacts with nob-1 and ceh-32.

It localises to the cytoplasm. The protein localises to the nucleus. Functionally, inhibits DNA replication by binding to the DNA replication licensing factor cdt-1. Its interaction with cdt-1 prevents the cdt-1 loading of the mini-chromosome maintenance (MCM) complex onto DNA and therefore DNA replication licencing. The protein is Geminin homolog of Caenorhabditis elegans.